A 634-amino-acid chain; its full sequence is Sodium-dependent neutral amino acid transporter B(0)AT1 (634 aa).

Over 1-41 (MVRLVLPNPGLEERIPSLDELEVIEKEEAGSRPKWDNKAQY) the chain is Cytoplasmic. Phosphoserine is present on Ser-17. The chain crosses the membrane as a helical span at residues 42–62 (MLTCVGFCVGLGNVWRFPYLC). Over 63–67 (QSHGG) the chain is Extracellular. The helical transmembrane segment at 68–88 (GAFMIPFLILLVFEGIPLLYL) threads the bilayer. Over 89-119 (EFAIGQRLRKGSMGVWSSIHPALKGIGIASM) the chain is Cytoplasmic. The helical transmembrane segment at 120–140 (FVSFMVGLYYNTIIAWVMWYF) threads the bilayer. Over 141-192 (FNSFQEPLPWSECPLNQNQTGYVEECAKSSSVDYFWYRETLNISTSISDSGS) the chain is Extracellular. N-linked (GlcNAc...) asparagine glycosylation is found at Asn-158 and Asn-182. The chain crosses the membrane as a helical span at residues 193–213 (IQWWILLCLTCAWSVLYVCII). The Cytoplasmic portion of the chain corresponds to 214 to 221 (RGIETTGK). The helical transmembrane segment at 222–242 (AVYITSTLPYVVLTIFLIRGL) threads the bilayer. Residues 243–268 (TLKGATNGIVFLFTPNITELSNPNTW) are Extracellular-facing. The N-linked (GlcNAc...) asparagine glycan is linked to Asn-258. The helical transmembrane segment at 269 to 289 (LDAGAQVFYSFSLAFGGLISF) threads the bilayer. Residues 290-304 (SSYNSVHNNCEMDSV) are Cytoplasmic-facing. The helical transmembrane segment at 305–325 (IVSVINGFTSVYAATVVYSII) threads the bilayer. Over 326-413 (GFRATERFDD…TEAITKMPVS (88 aa)) the chain is Extracellular. N-linked (GlcNAc...) asparagine glycans are attached at residues Asn-354 and Asn-368. Residues 414–434 (PLWSVLFFIMLFCLGLSSMFG) form a helical membrane-spanning segment. The Cytoplasmic segment spans residues 435–456 (NMEGVVVPLQDLNITPKKWPKE). Residues 457 to 477 (LLTGLICLGTYLIAFIFTLNS) form a helical membrane-spanning segment. Residues 478–487 (GQYWLSLLDS) lie on the Extracellular side of the membrane. A helical membrane pass occupies residues 488–508 (FAGSIPLLIIAFCEMFAVVYV). Over 509-531 (YGVDRFNKDIEFMIGHKPNIFWQ) the chain is Cytoplasmic. Residues 532–552 (VTWRVVSPLIMLVIFLFFFVI) form a helical membrane-spanning segment. Over 553 to 581 (EVNKTLMYSIWDPNYEEFPKSQKIPYPNW) the chain is Extracellular. Asn-555 carries an N-linked (GlcNAc...) asparagine glycan. The chain crosses the membrane as a helical span at residues 582-602 (VYAVVVTVAGVPCLSIPCFAI). Over 603–634 (YKFIRNCCQKSDDHHGLVNTLSTASVNGDLKN) the chain is Cytoplasmic. Ser-627 bears the Phosphoserine mark.

Belongs to the sodium:neurotransmitter symporter (SNF) (TC 2.A.22) family. SLC6A19 subfamily. Interacts in a tissue-specific manner with ACE2 in small intestine and with CLTRN in the kidney. Interacts with CLTRN; this interaction is required for trafficking of SLC6A19 to the plasma membrane and for its catalytic activation in kidneys. Interacts with ACE2; this interaction is required for trafficking of SLC6A19 to the plasma membrane and for its catalytic activation in intestine. Interacts with ANPEP; the interaction positively regulates its amino acid transporter activity. In terms of tissue distribution, predominantly expressed in kidney and small intestine (at protein level). Expressed in the intestinal brush border (at protein level). Expression not observed in other organs, such as lung, skeletal muscle, brain, liver and pancreas. In kidney, expression is localized in the renal cortex but not in the medulla. Substantial amounts of expression in the proximal tubules. The distal nephron segments and the glomeruli are consistently negative. In the small intestine, expression is exclusively localized in villus enterocytes. High resolution of the hybridization-positive villi reveals a gradient of expression with the highest levels in apical cells. Not detected in crypt cells or in any other cell types of the small intestine.

It is found in the cell membrane. It carries out the reaction L-alanine(in) + Na(+)(in) = L-alanine(out) + Na(+)(out). The enzyme catalyses L-cysteine(in) + Na(+)(in) = L-cysteine(out) + Na(+)(out). It catalyses the reaction L-glutamine(in) + Na(+)(in) = L-glutamine(out) + Na(+)(out). The catalysed reaction is glycine(in) + Na(+)(in) = glycine(out) + Na(+)(out). It carries out the reaction L-isoleucine(in) + Na(+)(in) = L-isoleucine(out) + Na(+)(out). The enzyme catalyses L-leucine(in) + Na(+)(in) = L-leucine(out) + Na(+)(out). It catalyses the reaction L-methionine(in) + Na(+)(in) = L-methionine(out) + Na(+)(out). The catalysed reaction is L-phenylalanine(in) + Na(+)(in) = L-phenylalanine(out) + Na(+)(out). It carries out the reaction L-serine(in) + Na(+)(in) = L-serine(out) + Na(+)(out). The enzyme catalyses L-tryptophan(in) + Na(+)(in) = L-tryptophan(out) + Na(+)(out). It catalyses the reaction L-tyrosine(in) + Na(+)(in) = L-tyrosine(out) + Na(+)(out). The catalysed reaction is L-valine(in) + Na(+)(in) = L-valine(out) + Na(+)(out). Transporter that mediates resorption of neutral amino acids across the apical membrane of renal and intestinal epithelial cells. This uptake is sodium-dependent and chloride-independent. Requires CLTRN in kidney or ACE2 in intestine for cell surface expression and amino acid transporter activity. This chain is Sodium-dependent neutral amino acid transporter B(0)AT1 (Slc6a19), found in Mus musculus (Mouse).